Reading from the N-terminus, the 452-residue chain is Phosphatidylinositol N-acetylglucosaminyltransferase GPI3 subunit (452 aa).

The helical transmembrane segment at 407–427 (LYLLCGIVEYMLFFLLEWLYP) threads the bilayer.

This sequence belongs to the glycosyltransferase group 1 family. Component of the phosphatidylinositol N-acetylglucosaminyltransferase complex composed of at least GPI1, GPI2, GPI3, GPI15, GPI19 and ERI1.

Its subcellular location is the endoplasmic reticulum membrane. The catalysed reaction is a 1,2-diacyl-sn-glycero-3-phospho-(1D-myo-inositol) + UDP-N-acetyl-alpha-D-glucosamine = a 6-(N-acetyl-alpha-D-glucosaminyl)-1-(1,2-diacyl-sn-glycero-3-phospho)-1D-myo-inositol + UDP + H(+). It participates in glycolipid biosynthesis; glycosylphosphatidylinositol-anchor biosynthesis. With respect to regulation, inhibited by Ras, probably via the interaction between RAS2 and ERI1. Functionally, catalytic subunit in the complex catalyzing the transfer of N-acetylglucosamine from UDP-N-acetylglucosamine to phosphatidylinositol, the first step of GPI biosynthesis. The sequence is that of Phosphatidylinositol N-acetylglucosaminyltransferase GPI3 subunit (SPT14) from Saccharomyces cerevisiae (strain RM11-1a) (Baker's yeast).